An 861-amino-acid chain; its full sequence is DNA mismatch repair protein MutS (861 aa).

614 to 621 (GPNMGGKS) contributes to the ATP binding site.

This sequence belongs to the DNA mismatch repair MutS family.

Its function is as follows. This protein is involved in the repair of mismatches in DNA. It is possible that it carries out the mismatch recognition step. This protein has a weak ATPase activity. The chain is DNA mismatch repair protein MutS from Mannheimia succiniciproducens (strain KCTC 0769BP / MBEL55E).